A 306-amino-acid polypeptide reads, in one-letter code: uncharacterized protein (306 aa).

Helical transmembrane passes span Leu-6–Leu-26, Ala-35–Ala-55, Tyr-69–Ser-89, Val-98–Phe-118, Leu-122–Asn-142, Tyr-154–Ala-174, Gln-186–Ser-206, Leu-211–Gly-231, Val-247–Ser-267, and Tyr-281–Leu-301. EamA domains follow at residues Met-17–Asn-142 and Leu-166–Ile-296.

This sequence belongs to the EamA transporter family.

The protein localises to the cell membrane. This is an uncharacterized protein from Haemophilus influenzae (strain ATCC 51907 / DSM 11121 / KW20 / Rd).